Consider the following 185-residue polypeptide: Ribosome-recycling factor (185 aa).

It belongs to the RRF family.

Its subcellular location is the cytoplasm. In terms of biological role, responsible for the release of ribosomes from messenger RNA at the termination of protein biosynthesis. May increase the efficiency of translation by recycling ribosomes from one round of translation to another. The chain is Ribosome-recycling factor from Corynebacterium efficiens (strain DSM 44549 / YS-314 / AJ 12310 / JCM 11189 / NBRC 100395).